The chain runs to 169 residues: Protein AIG2 B (169 aa).

Substrate is bound at residue tyrosine 15–glutamate 20. Residue glutamate 83 is the Proton acceptor of the active site.

This sequence belongs to the gamma-glutamylcyclotransferase family. Expressed in roots, leaves and stems.

Functionally, putative gamma-glutamylcyclotransferase. This is Protein AIG2 B from Arabidopsis thaliana (Mouse-ear cress).